A 343-amino-acid chain; its full sequence is Isopentenyl-diphosphate delta-isomerase (343 aa).

6–7 (RK) is a binding site for substrate. Residues Ser-63, 64–66 (SMT), Ser-94, and Asn-122 contribute to the FMN site. 94–96 (SMR) is a binding site for substrate. Gln-157 is a substrate binding site. Glu-158 contacts Mg(2+). Residues Lys-189, Thr-219, 269 to 271 (GLK), and 290 to 291 (AG) each bind FMN.

The protein belongs to the IPP isomerase type 2 family. In terms of assembly, homooctamer. Dimer of tetramers. The cofactor is FMN. NADPH serves as cofactor. Mg(2+) is required as a cofactor.

It is found in the cytoplasm. It catalyses the reaction isopentenyl diphosphate = dimethylallyl diphosphate. In terms of biological role, involved in the biosynthesis of isoprenoids. Catalyzes the 1,3-allylic rearrangement of the homoallylic substrate isopentenyl (IPP) to its allylic isomer, dimethylallyl diphosphate (DMAPP). The protein is Isopentenyl-diphosphate delta-isomerase of Rickettsia bellii (strain OSU 85-389).